Reading from the N-terminus, the 695-residue chain is L-type lectin-domain containing receptor kinase S.7 (695 aa).

The signal sequence occupies residues 1 to 23 (MPPRCRRLPLLFILLLAVRPLSA). The Extracellular segment spans residues 24-331 (AAASSIAAAP…NHRRRHLFYK (308 aa)). A legume-lectin like region spans residues 37–276 (YRRISWASNL…VERWTFRTFG (240 aa)). N-linked (GlcNAc...) asparagine glycosylation is found at N45 and N279. The span at 286–320 (PTKYIGPMPPNNQPLPPPPSPSPSPPPPSPPPPPH) shows a compositional bias: pro residues. The segment at 286 to 323 (PTKYIGPMPPNNQPLPPPPSPSPSPPPPSPPPPPHPNH) is disordered. The chain crosses the membrane as a helical span at residues 332 to 352 (VLGGVLGGMVLLGLVVVGSAV). Topologically, residues 353–695 (LLGRSVRRKN…TANTAFFSCR (343 aa)) are cytoplasmic. T376 is modified (phosphothreonine). S378 carries the phosphoserine modification. A phosphothreonine mark is found at T386 and T403. The Protein kinase domain maps to 389-661 (FDSGNVIGVG…SMLDGTAPLI (273 aa)). ATP-binding positions include 395–403 (IGVGGSGAT) and K418. D514 functions as the Proton acceptor in the catalytic mechanism. T657 is modified (phosphothreonine).

It in the N-terminal section; belongs to the leguminous lectin family. This sequence in the C-terminal section; belongs to the protein kinase superfamily. Ser/Thr protein kinase family. Interacts with INP1. Interaction with INP1 is required for DAF1 polar localization at the future aperture sites in tetrads. Post-translationally, autophosphorylated at Thr-376; Ser-378; Thr-386; Thr-403 and Thr-657. Expressed in roots, leaves, lemma, palea, pistil and anthers.

The protein localises to the cell membrane. The protein resides in the cytoplasm. It is found in the cytosol. It catalyses the reaction L-seryl-[protein] + ATP = O-phospho-L-seryl-[protein] + ADP + H(+). The catalysed reaction is L-threonyl-[protein] + ATP = O-phospho-L-threonyl-[protein] + ADP + H(+). Legume-lectin receptor-like kinase required for normal pollen development and male fertility. Regulates pollen exine assembly and aperture development. Plays a critical role in annulus formation, and may participate in the formation of the fibrillar-granular layer underneath the operculum. May function by regulating the expression of genes involved in pollen exine development. Kinase activity is required for its function in pollen development. This Oryza sativa subsp. japonica (Rice) protein is L-type lectin-domain containing receptor kinase S.7.